The chain runs to 1381 residues: MKAPAVLAPGILVLLFTLVQKSKGECKEALVKSTMNLNMQYQLPNFTAETPIQNVVLHKHHIYLGALNYIYVLNDIDLRKVAEYKTGPVLEHPDCFPCQDCSHKANLSGGIWRDNINMALLVDTYYDDQLISCGSVHRGTCQRHVLPPDNIADIKSEVHCMYSPQVDEEPSQCPDCVVSALGTKVLLSEKDRFINFFVGNTINSSYLPDHSLHSISVRRLKETQDGFKFLTDQSYIDVLPEFRDSYPIKYVHAFESNHFIYFLTVQRETLDAQTFHTRIIRFCSVDSGLHSYMEMPLECILTEKRRKRSTREEVFNILQAAYVSKPGTQLAKQIGANLNDDILYGVFAQSKPDSAEPMNRSAVCAFPVKYVNEFFNKIVNKNNVRCLQHFYGPNHEHCFNRTLLRNSSGCEVRSDEYRTEFTTALQRIDLFMGQFNQVLLTSISTFIKGDLTIANLGTSEGRFMQVVVSRPGLSTPHVNFHLDSHPVSPEVIVEPLNQNGYTLVVTGKKITKIPLNGLGCEHFQSCSQCLSAPPFVQCGWCQDKCVQLEECPSGTWTQEICLPTVYKVFPTSAPLEGGTTLTICGWDFGFRRNNKFDLRKTKVLLGNESCTLTLSESTTNTLKCTVGPAMNEHFNMSIVISNGRGTTQYRTFSYVDPVITNISPSFGPKTGGTLLTLTGMHLNSGNSRHISIGGKTCTLKSVSDSILECYTPAQTTPTEFPIKLKIDLANREINSFTYREDPIVYEIHPTKSFISGGSTITGVGRNLNSVSVLRMVINVHEAERNFTVACQHRSNSEIICCTTPSLQQLNLQLPLKTKAFFMLDGIHSKYFDLIYVHNPVFKPFEKPVMISIGNENVLEIKGNDIDPEAVKGEVLKVGNKSCENIHSHSEAVLCTVPNDLLKLNSELNIEWKQAISSTVLGKVIVQPDQNFTGLIVGVVSISIILLLLLGLFLWLKKRKQIKDLGSELVRYDARVHTPHLDRLVSARSVSPTTEMVSSEPVDYRATFPEDQFPNSSQNGSCRQVQYPLTDLSPILTSGDSDISSPLLQNTVHIDLSALNPELVQAVQHVVIGPSSLIVHFNEVIGRGHFGCVYHGTLLDNDDKKIHCAVKSLNRITDIGEVSQFLTEGIIMKDFSHPNVLSLLGICLRSEGSPLVVLPYMKHGDLRNFIRNETHNPTVKDLIGFGLQVAKGMKYLASKKFVHRDLAARNCMLDEKFTVKVADFGLARDVYDKEYYSVHNKTGAKLPVKWMALESLQTQKFTTKSDVWSFGVLLWELMTRGAPPYPDVNTFDITVYLLQGRRLLQPEYCPDPLYEVMLKCWHPRAELRPSFSELVSRISAIFSTFIGEHYVHVNATYVNVKCVAPYPSLLSSQDNVDGEGDT.

The N-terminal stretch at 1–24 (MKAPAVLAPGILVLLFTLVQKSKG) is a signal peptide. Residues 25–932 (ECKEALVKST…VIVQPDQNFT (908 aa)) are Extracellular-facing. Residues 27–515 (KEALVKSTMN…TGKKITKIPL (489 aa)) form the Sema domain. The N-linked (GlcNAc...) asparagine glycan is linked to asparagine 45. 4 disulfides stabilise this stretch: cysteine 95–cysteine 101, cysteine 98–cysteine 160, cysteine 133–cysteine 141, and cysteine 173–cysteine 176. A glycan (N-linked (GlcNAc...) asparagine) is linked at asparagine 106. N-linked (GlcNAc...) asparagine glycans are attached at residues asparagine 203 and asparagine 359. 2 disulfide bridges follow: cysteine 299–cysteine 364 and cysteine 386–cysteine 398. Residues asparagine 400 and asparagine 406 are each glycosylated (N-linked (GlcNAc...) asparagine). 4 disulfides stabilise this stretch: cysteine 520-cysteine 538, cysteine 526-cysteine 561, cysteine 529-cysteine 545, and cysteine 541-cysteine 551. IPT/TIG domains follow at residues 563–655 (PTVY…FSYV), 657–739 (PVIT…FTYR), and 742–836 (PIVY…LIYV). Threonine 582 carries an O-linked (Man) threonine glycan. N-linked (GlcNAc...) asparagine glycans are attached at residues asparagine 607 and asparagine 635. 2 O-linked (Man) threonine glycosylation sites follow: threonine 676 and threonine 761. Residues asparagine 785, asparagine 879, and asparagine 930 are each glycosylated (N-linked (GlcNAc...) asparagine). Residues 933–955 (GLIVGVVSISIILLLLLGLFLWL) form a helical membrane-spanning segment. The Cytoplasmic portion of the chain corresponds to 956–1381 (KKRKQIKDLG…QDNVDGEGDT (426 aa)). Position 966 is a phosphoserine (serine 966). Threonine 977 bears the Phosphothreonine mark. Phosphoserine occurs at positions 990 and 997. Tyrosine 1003 is modified (phosphotyrosine). The region spanning 1078-1345 (VHFNEVIGRG…RISAIFSTFI (268 aa)) is the Protein kinase domain. ATP contacts are provided by residues 1084–1092 (IGRGHFGCV) and lysine 1110. The active-site Proton acceptor is the aspartate 1204. The interval 1212-1381 (LDEKFTVKVA…QDNVDGEGDT (170 aa)) is interaction with RANBP9. Tyrosine 1230 bears the Phosphotyrosine mark. Phosphotyrosine; by autocatalysis is present on residues tyrosine 1234 and tyrosine 1235. Threonine 1289 carries the phosphothreonine modification. The segment at 1320 to 1359 (WHPRAELRPSFSELVSRISAIFSTFIGEHYVHVNATYVNV) is interaction with MUC20. Tyrosine 1349 and tyrosine 1356 each carry phosphotyrosine; by autocatalysis. A Phosphotyrosine modification is found at tyrosine 1365.

This sequence belongs to the protein kinase superfamily. Tyr protein kinase family. In terms of assembly, heterodimer made of an alpha chain (50 kDa) and a beta chain (145 kDa) which are disulfide linked. Binds PLXNB1. Interacts when phosphorylated with downstream effectors including STAT3, PIK3R1, SRC, PCLG1, GRB2 and GAB1. Interacts with SPSB1, SPSB2 and SPSB4. Interacts with INPP5D/SHIP1. When phosphorylated at Tyr-1356, interacts with INPPL1/SHIP2. Interacts with RANBP9 and RANBP10, as well as SPSB1, SPSB2, SPSB3 and SPSB4. SPSB1 binding occurs in the presence and in the absence of HGF, however HGF treatment has a positive effect on this interaction. Interacts with MUC20; prevents interaction with GRB2 and suppresses hepatocyte growth factor-induced cell proliferation. Interacts with GRB10. Interacts with PTPN1 and PTPN2. Interacts with HSP90AA1 and HSP90AB1; the interaction suppresses MET kinase activity. Interacts with tensin TNS3. Interacts (when phosphorylated) with tensin TNS4 (via SH2 domain); the interaction increases MET protein stability by inhibiting MET endocytosis and subsequent lysosomal degradation. In terms of processing, autophosphorylated in response to ligand binding on Tyr-1234 and Tyr-1235 in the kinase domain leading to further phosphorylation of Tyr-1349 and Tyr-1356 in the C-terminal multifunctional docking site. Dephosphorylated by PTPRJ at Tyr-1349 and Tyr-1365. Dephosphorylated by PTPN1 and PTPN2. Ubiquitinated. Ubiquitination by CBL regulates the receptor stability and activity through proteasomal degradation. Post-translationally, O-mannosylation of IPT/TIG domains by TMEM260 is required for protein maturation. O-mannosylated residues are composed of single mannose glycans that are not elongated or modified.

It localises to the membrane. It catalyses the reaction L-tyrosyl-[protein] + ATP = O-phospho-L-tyrosyl-[protein] + ADP + H(+). In its inactive state, the C-terminal tail interacts with the catalytic domain and inhibits the kinase activity. Upon ligand binding, the C-terminal tail is displaced and becomes phosphorylated, thus increasing the kinase activity. Functionally, receptor tyrosine kinase that transduces signals from the extracellular matrix into the cytoplasm by binding to hepatocyte growth factor/HGF ligand. Regulates many physiological processes including proliferation, scattering, morphogenesis and survival. Ligand binding at the cell surface induces autophosphorylation of MET on its intracellular domain that provides docking sites for downstream signaling molecules. Following activation by ligand, interacts with the PI3-kinase subunit PIK3R1, PLCG1, SRC, GRB2, STAT3 or the adapter GAB1. Recruitment of these downstream effectors by MET leads to the activation of several signaling cascades including the RAS-ERK, PI3 kinase-AKT, or PLCgamma-PKC. The RAS-ERK activation is associated with the morphogenetic effects while PI3K/AKT coordinates prosurvival effects. During embryonic development, MET signaling plays a role in gastrulation, development and migration of muscles and neuronal precursors, angiogenesis and kidney formation. In adults, participates in wound healing as well as organ regeneration and tissue remodeling. Also promotes differentiation and proliferation of hematopoietic cells. This chain is Hepatocyte growth factor receptor (MET), found in Sus scrofa (Pig).